A 365-amino-acid chain; its full sequence is DNA replication and repair protein RecF (365 aa).

30 to 37 (GNNGMGKT) is an ATP binding site.

The protein belongs to the RecF family.

The protein resides in the cytoplasm. The RecF protein is involved in DNA metabolism; it is required for DNA replication and normal SOS inducibility. RecF binds preferentially to single-stranded, linear DNA. It also seems to bind ATP. This is DNA replication and repair protein RecF from Parabacteroides distasonis (strain ATCC 8503 / DSM 20701 / CIP 104284 / JCM 5825 / NCTC 11152).